A 60-amino-acid polypeptide reads, in one-letter code: Potassium channel toxin-like Tx677 (60 aa).

The first 22 residues, 1–22 (MKISALVMITLLICSMMILCQG), serve as a signal peptide directing secretion. Disulfide bonds link C30/C51, C36/C56, and C40/C58.

This sequence belongs to the short scorpion toxin superfamily. Potassium channel inhibitor family. In terms of tissue distribution, expressed by the venom gland.

The protein resides in the secreted. In terms of biological role, weakly inhibits Kv11.1/KCNH2/ERG1, Kv1.2/KCNA2 and Kv1.3/KCNA3 voltage-gated potassium channels. The protein is Potassium channel toxin-like Tx677 of Buthus israelis (Israeli scorpion).